The primary structure comprises 291 residues: Lipoyl synthase (291 aa).

The [4Fe-4S] cluster site is built by Cys43, Cys48, Cys54, Cys69, Cys73, Cys76, and Ser280. The Radical SAM core domain maps to 55-269 (FSSRTATFLI…AAYGRARGIP (215 aa)).

Belongs to the radical SAM superfamily. Lipoyl synthase family. [4Fe-4S] cluster is required as a cofactor.

It localises to the cytoplasm. It carries out the reaction [[Fe-S] cluster scaffold protein carrying a second [4Fe-4S](2+) cluster] + N(6)-octanoyl-L-lysyl-[protein] + 2 oxidized [2Fe-2S]-[ferredoxin] + 2 S-adenosyl-L-methionine + 4 H(+) = [[Fe-S] cluster scaffold protein] + N(6)-[(R)-dihydrolipoyl]-L-lysyl-[protein] + 4 Fe(3+) + 2 hydrogen sulfide + 2 5'-deoxyadenosine + 2 L-methionine + 2 reduced [2Fe-2S]-[ferredoxin]. It functions in the pathway protein modification; protein lipoylation via endogenous pathway; protein N(6)-(lipoyl)lysine from octanoyl-[acyl-carrier-protein]: step 2/2. Its function is as follows. Catalyzes the radical-mediated insertion of two sulfur atoms into the C-6 and C-8 positions of the octanoyl moiety bound to the lipoyl domains of lipoate-dependent enzymes, thereby converting the octanoylated domains into lipoylated derivatives. The protein is Lipoyl synthase of Oleidesulfovibrio alaskensis (strain ATCC BAA-1058 / DSM 17464 / G20) (Desulfovibrio alaskensis).